Here is a 221-residue protein sequence, read N- to C-terminus: NEP1-interacting protein-like 1 (221 aa).

3 helical membrane passes run 35-55, 69-89, and 95-115; these read LFTF…GALI, VGAI…LLLW, and GIGC…GRLV. Residues 176 to 218 form an RING-type; atypical zinc finger; that stretch reads CSVCLQDFQVGETVRSLPHCHHMFHLPCIDKWLRRHASCPLCR.

Belongs to the RING-type zinc finger family. NIP subfamily.

It is found in the membrane. Functionally, may be involved in the early steps of the plant defense signaling pathway. The protein is NEP1-interacting protein-like 1 (ATL27) of Arabidopsis thaliana (Mouse-ear cress).